The chain runs to 228 residues: Heptaprenylglyceryl phosphate synthase (228 aa).

Lys12 lines the sn-glycerol 1-phosphate pocket. Residues Asp14 and Ser40 each coordinate Mg(2+). Sn-glycerol 1-phosphate contacts are provided by residues 158 to 163 (YLEYSG), Gly188, and 208 to 209 (GN).

Belongs to the GGGP/HepGP synthase family. Group I subfamily. As to quaternary structure, homodimer. Mg(2+) serves as cofactor.

It carries out the reaction sn-glycerol 1-phosphate + all-trans-heptaprenyl diphosphate = 3-heptaprenyl-sn-glycero-1-phosphate + diphosphate. The protein operates within membrane lipid metabolism; glycerophospholipid metabolism. Prenyltransferase that catalyzes in vivo the transfer of the heptaprenyl moiety of heptaprenyl pyrophosphate (HepPP; 35 carbon atoms) to the C3 hydroxyl of sn-glycerol-1-phosphate (G1P), producing heptaprenylglyceryl phosphate (HepGP). This reaction is an ether-bond-formation step in the biosynthesis of archaea-type G1P-based membrane lipids found in Bacillales. To a much lesser extent, is also able to use geranyl diphosphate (GPP; C10) and geranylgeranyl diphosphate (GGPP; C20) as the prenyl donors, but not farnesyl pyrophosphate (FPP; C15). Cannot use glycerol-3-phosphate (G3P) or 3-phosphoglycerate (3PG) as an acceptor. The chain is Heptaprenylglyceryl phosphate synthase from Bacillus subtilis (strain 168).